Here is a 383-residue protein sequence, read N- to C-terminus: ATP phosphoribosyltransferase regulatory subunit (383 aa).

Belongs to the class-II aminoacyl-tRNA synthetase family. HisZ subfamily. In terms of assembly, heteromultimer composed of HisG and HisZ subunits.

It is found in the cytoplasm. It functions in the pathway amino-acid biosynthesis; L-histidine biosynthesis; L-histidine from 5-phospho-alpha-D-ribose 1-diphosphate: step 1/9. Its function is as follows. Required for the first step of histidine biosynthesis. May allow the feedback regulation of ATP phosphoribosyltransferase activity by histidine. The polypeptide is ATP phosphoribosyltransferase regulatory subunit (Neisseria gonorrhoeae (strain ATCC 700825 / FA 1090)).